Here is a 149-residue protein sequence, read N- to C-terminus: Large ribosomal subunit protein bL20m (149 aa).

The N-terminal 9 residues, 1-9 (MVFLTTRLW), are a transit peptide targeting the mitochondrion.

The protein belongs to the bacterial ribosomal protein bL20 family. As to quaternary structure, component of the mitochondrial ribosome large subunit (39S) which comprises a 16S rRNA and about 50 distinct proteins. Interacts with OXA1L.

The protein localises to the mitochondrion. This chain is Large ribosomal subunit protein bL20m (Mrpl20), found in Mus musculus (Mouse).